A 490-amino-acid polypeptide reads, in one-letter code: MDPVLVLVLTLSCLLLLSLWRQNSGRGKLPPGPTPFPIIGNILQIDIKNISKSFNYFSKVYGPVFTLYFGSKPTVVVHGYEAVKEALDDLGEEFSGRGSFQIFERINNDLGVIFSNGTKWKELRRFSIMTLRSFGMGKRSIEDRIQEEASCLVEELRKANGSLCDPTFILSCAPSNVICSVIFHNRFDYKDEKFLNLMERLNENFKILNSPWMQVYNALPTLINYLPGSHNKVIKNFTEIKSYILGRVKEHQETLDMDNPRDFIDCFLIKMEQEKHNPHSEFTIESLMATVTDIFVAGTETTNITLRYGLLLLLKHTEVTAKVQAEIDHVIGRHRSPCMQDRTRMPYTDAMVHEIQRYIDLIPNNVPHAATCNVRFRSYFIPKGTELVTSLTSVLHDDKEFPNPEVFDPGHFLDENGNFKKSDYFMPFSIGKRMCVGEALARTELFLILTTILQNFNLKSLVDTKDIDTTPVANTFGRVPPSYQLYFIPR.

A heme-binding site is contributed by cysteine 435.

It belongs to the cytochrome P450 family. It depends on heme as a cofactor. As to expression, highest level in colon. Low levels in liver and small intestine.

Its subcellular location is the endoplasmic reticulum membrane. The protein resides in the microsome membrane. It carries out the reaction an organic molecule + reduced [NADPH--hemoprotein reductase] + O2 = an alcohol + oxidized [NADPH--hemoprotein reductase] + H2O + H(+). Metabolizes arachidonic acid mainly to 19-hydroxyeicosatetraenoic acid (HETE). This is Cytochrome P450 2C55 from Mus musculus (Mouse).